Reading from the N-terminus, the 77-residue chain is U8-lycotoxin-Ls1w (77 aa).

A signal peptide spans 1–20; the sequence is MKLIIFTGLVLFAIVSLIEA. Positions 21 to 26 are excised as a propeptide; that stretch reads QAENEK.

Belongs to the neurotoxin 19 (CSTX) family. 08 (U8-Lctx) subfamily. Post-translationally, contains 4 disulfide bonds. In terms of tissue distribution, expressed by the venom gland.

The protein localises to the secreted. This is U8-lycotoxin-Ls1w from Lycosa singoriensis (Wolf spider).